Reading from the N-terminus, the 419-residue chain is MAGDSRNAMNQDMEIGVTPRDPKKIPKQARDYIPIATDRTRLLSEGKKPRQRYMEKSGKCNVHHGNVQETYRYLSDLFTTLVDLKWRFNLLVFTMVYTITWLFFGFIWWLIAYIRGDLDHVGDREWIPCVENLSGFVSAFLFSIETETTIGYGFRVITEKCPEGIVLLLVQAILGSIVNAFMVGCMFVKISQPKKRAETLMFSNNAVISLRDEKLCLMFRVGDLRNSHIVEASIRAKLIKSRQTKEGEFIPLNQTDINVGFDTGDDRLFLVSPLIICHEINEKSPFWEMSRAQLTQEEFEVVVILEGMVEATGMTCQARSSYMDTEVLWGHRFTPVLTLEKGFYEVDYNTFHDTYETNTPSCCAKELAEMKREGRLLQYHPSPPLPGGCVGAELGAEAEQEGEEEPEGLSGSQETKDSA.

Residues 1 to 24 (MAGDSRNAMNQDMEIGVTPRDPKK) are disordered. The Cytoplasmic portion of the chain corresponds to 1-86 (MAGDSRNAMN…LFTTLVDLKW (86 aa)). Serine 5 is subject to Phosphoserine. A helical transmembrane segment spans residues 87 to 111 (RFNLLVFTMVYTITWLFFGFIWWLI). Over 112–135 (AYIRGDLDHVGDREWIPCVENLSG) the chain is Extracellular. The segment at residues 136-147 (FVSAFLFSIETE) is an intramembrane region (helical; Pore-forming). The pore-forming intramembrane region spans 148–154 (TTIGYGF). Residues 149–154 (TIGYGF) carry the Selectivity filter motif. Residues 155–163 (RVITEKCPE) lie on the Extracellular side of the membrane. Residues 164–185 (GIVLLLVQAILGSIVNAFMVGC) form a helical membrane-spanning segment. Over 186-419 (MFVKISQPKK…SGSQETKDSA (234 aa)) the chain is Cytoplasmic. A disordered region spans residues 381-419 (PSPPLPGGCVGAELGAEAEQEGEEEPEGLSGSQETKDSA). A compositionally biased stretch (acidic residues) spans 396–407 (AEAEQEGEEEPE).

It belongs to the inward rectifier-type potassium channel (TC 1.A.2.1) family. KCNJ5 subfamily. As to quaternary structure, associates with KCNJ3/GIRK1 or KCNJ6/GIRK2 to form a G-protein-activated heteromultimer pore-forming unit. The resulting inward current is much larger.

It is found in the membrane. It catalyses the reaction K(+)(in) = K(+)(out). With respect to regulation, heteromultimer composed of KCNJ3/GIRK1 and KCNJ5/GIRK4 is activated by phosphatidylinositol 4,5 biphosphate (PtdIns(4,5)P2). Its function is as follows. Inward rectifier potassium channels are characterized by a greater tendency to allow potassium to flow into the cell rather than out of it. Their voltage dependence is regulated by the concentration of extracellular potassium; as external potassium is raised, the voltage range of the channel opening shifts to more positive voltages. The inward rectification is mainly due to the blockage of outward current by internal magnesium. This receptor plays a crucial role in regulating the heartbeat. Can be blocked by external barium. This potassium channel is controlled by G proteins. In Bos taurus (Bovine), this protein is G protein-activated inward rectifier potassium channel 4 (KCNJ5).